The following is a 229-amino-acid chain: Ribonuclease HII (229 aa).

The RNase H type-2 domain maps to 34–223; that stretch reads WPVAGADEAG…LRKVEDGPQM (190 aa). A divalent metal cation contacts are provided by aspartate 40, glutamate 41, and aspartate 131.

The protein belongs to the RNase HII family. Mn(2+) is required as a cofactor. It depends on Mg(2+) as a cofactor.

The protein localises to the cytoplasm. It carries out the reaction Endonucleolytic cleavage to 5'-phosphomonoester.. In terms of biological role, endonuclease that specifically degrades the RNA of RNA-DNA hybrids. The sequence is that of Ribonuclease HII from Rhizobium leguminosarum bv. trifolii (strain WSM2304).